The primary structure comprises 890 residues: DNA mismatch repair protein MutS (890 aa).

An ATP-binding site is contributed by 607–614 (GPNMSGKS).

Belongs to the DNA mismatch repair MutS family.

Its function is as follows. This protein is involved in the repair of mismatches in DNA. It is possible that it carries out the mismatch recognition step. This protein has a weak ATPase activity. This is DNA mismatch repair protein MutS from Bacillus thuringiensis (strain Al Hakam).